Reading from the N-terminus, the 776-residue chain is 5-methyltetrahydropteroyltriglutamate--homocysteine methyltransferase (776 aa).

5-methyltetrahydropteroyltri-L-glutamate contacts are provided by residues 13–16 (RELK) and Lys127. Residues 450–452 (IGS) and Glu503 contribute to the L-homocysteine site. L-methionine contacts are provided by residues 450–452 (IGS) and Glu503. Trp580 is a 5-methyltetrahydropteroyltri-L-glutamate binding site. Asp618 serves as a coordination point for L-homocysteine. Residue Asp618 coordinates L-methionine. Glu624 lines the 5-methyltetrahydropteroyltri-L-glutamate pocket. Zn(2+)-binding residues include His660, Cys662, and Glu684. The Proton donor role is filled by His713. Cys745 contacts Zn(2+).

This sequence belongs to the vitamin-B12 independent methionine synthase family. It depends on Zn(2+) as a cofactor.

The catalysed reaction is 5-methyltetrahydropteroyltri-L-glutamate + L-homocysteine = tetrahydropteroyltri-L-glutamate + L-methionine. It functions in the pathway amino-acid biosynthesis; L-methionine biosynthesis via de novo pathway; L-methionine from L-homocysteine (MetE route): step 1/1. Functionally, catalyzes the transfer of a methyl group from 5-methyltetrahydrofolate to homocysteine resulting in methionine formation. This is 5-methyltetrahydropteroyltriglutamate--homocysteine methyltransferase from Mesorhizobium japonicum (strain LMG 29417 / CECT 9101 / MAFF 303099) (Mesorhizobium loti (strain MAFF 303099)).